The following is a 285-amino-acid chain: SKVVIATKVASRSSHLSWLRSGDCKLSKDNILKAVDGSLSRLNTDYIDLLQLHWPDRYVPMNANGDFHEVFHDTENMIDENSVPLEDQLDALQTLLTQGKIRHWGLSNETPWGTLRFYKLAKQAGVAAPASVQLHYNLLCRNEVEKGFVELCRPQNTGIAILAYAPLAGGILTGKYLEYMDPTTSGRLLRFPSYMSRYRGSLAARAVKDYYNIAMSYKYPNLCALALRWVLTRPFICSTVIGANDFYQLRENIHCSMPSLGITDLLEREINQLHWKWRDPIRICQ.

Residue 165 to 175 (APLAGGILTGK) participates in NADP(+) binding.

The protein belongs to the aldo/keto reductase family. Aldo/keto reductase 2 subfamily.

The sequence is that of Aldo-keto reductase from Babesia bovis.